A 319-amino-acid chain; its full sequence is Tyrosine--tRNA ligase (319 aa).

Tyr40 contributes to the L-tyrosine binding site. A 'HIGH' region motif is present at residues 45–53 (PSGRIHMGH). L-tyrosine-binding residues include Tyr159, Gln163, Asp166, and Gln181. A 'KMSKS' region motif is present at residues 216-220 (KMSSS). Ser219 contributes to the ATP binding site.

Belongs to the class-I aminoacyl-tRNA synthetase family. TyrS type 3 subfamily. In terms of assembly, homodimer.

Its subcellular location is the cytoplasm. The enzyme catalyses tRNA(Tyr) + L-tyrosine + ATP = L-tyrosyl-tRNA(Tyr) + AMP + diphosphate + H(+). Catalyzes the attachment of tyrosine to tRNA(Tyr) in a two-step reaction: tyrosine is first activated by ATP to form Tyr-AMP and then transferred to the acceptor end of tRNA(Tyr). This chain is Tyrosine--tRNA ligase, found in Methanococcus maripaludis (strain DSM 14266 / JCM 13030 / NBRC 101832 / S2 / LL).